A 162-amino-acid chain; its full sequence is CASP-like protein 1C1 (162 aa).

Residues 1–7 (MFSAKAR) lie on the Cytoplasmic side of the membrane. Residues 8 to 28 (WIVAVVLRVAAAGAAAVAAVL) traverse the membrane as a helical segment. Residues 29-52 (MAMSHDEVIVYGMEVQAKFRYTPS) lie on the Extracellular side of the membrane. The helical transmembrane segment at 53 to 73 (LVFFVAANAAVSACSLVVLLV) threads the bilayer. At 74 to 83 (PSSTSKLAAR) the chain is on the cytoplasmic side. The chain crosses the membrane as a helical span at residues 84 to 104 (LLLMADVVLGMVLAGAFAAAG). Over 105–135 (AMAELGKNGNSHAGWIAICVQVPLFCDRVRS) the chain is Extracellular. Residues 136–156 (ALVAGSATIVLYYLMLMYSIY) traverse the membrane as a helical segment. Residues 157–162 (TLPMFP) lie on the Cytoplasmic side of the membrane.

It belongs to the Casparian strip membrane proteins (CASP) family. In terms of assembly, homodimer and heterodimers.

The protein localises to the cell membrane. The protein is CASP-like protein 1C1 of Oryza sativa subsp. japonica (Rice).